A 184-amino-acid chain; its full sequence is Large ribosomal subunit protein uL10 (184 aa).

The protein belongs to the universal ribosomal protein uL10 family. In terms of assembly, part of the ribosomal stalk of the 50S ribosomal subunit. The N-terminus interacts with L11 and the large rRNA to form the base of the stalk. The C-terminus forms an elongated spine to which L12 dimers bind in a sequential fashion forming a multimeric L10(L12)X complex.

Functionally, forms part of the ribosomal stalk, playing a central role in the interaction of the ribosome with GTP-bound translation factors. This Gluconobacter oxydans (strain 621H) (Gluconobacter suboxydans) protein is Large ribosomal subunit protein uL10.